The sequence spans 118 residues: UPF0058 protein MJ1132 (118 aa).

This sequence belongs to the UPF0058 family.

The protein is UPF0058 protein MJ1132 of Methanocaldococcus jannaschii (strain ATCC 43067 / DSM 2661 / JAL-1 / JCM 10045 / NBRC 100440) (Methanococcus jannaschii).